The chain runs to 873 residues: DNA mismatch repair protein MutS (873 aa).

Position 628 to 635 (628 to 635 (GPNMAGKS)) interacts with ATP.

This sequence belongs to the DNA mismatch repair MutS family.

Functionally, this protein is involved in the repair of mismatches in DNA. It is possible that it carries out the mismatch recognition step. This protein has a weak ATPase activity. This Chlorobium chlorochromatii (strain CaD3) protein is DNA mismatch repair protein MutS.